A 293-amino-acid polypeptide reads, in one-letter code: Acetylglutamate kinase (293 aa).

Substrate contacts are provided by residues 71 to 72 (GG), Arg93, and Asn186.

It belongs to the acetylglutamate kinase family. ArgB subfamily.

The protein resides in the cytoplasm. It catalyses the reaction N-acetyl-L-glutamate + ATP = N-acetyl-L-glutamyl 5-phosphate + ADP. It functions in the pathway amino-acid biosynthesis; L-arginine biosynthesis; N(2)-acetyl-L-ornithine from L-glutamate: step 2/4. Catalyzes the ATP-dependent phosphorylation of N-acetyl-L-glutamate. This is Acetylglutamate kinase from Synechococcus sp. (strain WH7803).